The primary structure comprises 120 residues: MTENRRIKKVNSLLREAIANVILKDVKHPKISNQWITVTRVCLSKDLHSARVYVSIMPHENTSAETLDALKASAGFIAYKASKGVVLKYFPEIHFYIEDIFSPQDHIENLLWKIREQDKN.

It belongs to the RbfA family. As to quaternary structure, monomer. Binds 30S ribosomal subunits, but not 50S ribosomal subunits or 70S ribosomes.

It is found in the cytoplasm. Functionally, one of several proteins that assist in the late maturation steps of the functional core of the 30S ribosomal subunit. Associates with free 30S ribosomal subunits (but not with 30S subunits that are part of 70S ribosomes or polysomes). Required for efficient processing of 16S rRNA. May interact with the 5'-terminal helix region of 16S rRNA. The polypeptide is Ribosome-binding factor A (Chlamydia caviae (strain ATCC VR-813 / DSM 19441 / 03DC25 / GPIC) (Chlamydophila caviae)).